We begin with the raw amino-acid sequence, 102 residues long: Citrate lyase acyl carrier protein (102 aa).

Position 14 is an O-(phosphoribosyl dephospho-coenzyme A)serine (Ser14).

The protein belongs to the CitD family. In terms of assembly, oligomer with a subunit composition of (alpha,beta,gamma)6.

It localises to the cytoplasm. Its function is as follows. Covalent carrier of the coenzyme of citrate lyase. This Streptococcus equi subsp. zooepidemicus (strain H70) protein is Citrate lyase acyl carrier protein.